Reading from the N-terminus, the 244-residue chain is uncharacterized protein (244 aa).

The GP-PDE domain occupies 5 to 244 (QLLLAHRGYS…ANKKFEIKIN (240 aa)).

This sequence to glycerophosphoryl diester phosphodiesterases (EC 3.1.4.46). It to M.genitalium MG385.

This is an uncharacterized protein from Mycoplasma genitalium (strain ATCC 33530 / DSM 19775 / NCTC 10195 / G37) (Mycoplasmoides genitalium).